We begin with the raw amino-acid sequence, 378 residues long: Ribosomal RNA large subunit methyltransferase G (378 aa).

Belongs to the methyltransferase superfamily. RlmG family.

It is found in the cytoplasm. The catalysed reaction is guanosine(1835) in 23S rRNA + S-adenosyl-L-methionine = N(2)-methylguanosine(1835) in 23S rRNA + S-adenosyl-L-homocysteine + H(+). Its function is as follows. Specifically methylates the guanine in position 1835 (m2G1835) of 23S rRNA. In Shewanella sp. (strain W3-18-1), this protein is Ribosomal RNA large subunit methyltransferase G.